We begin with the raw amino-acid sequence, 257 residues long: Imidazole glycerol phosphate synthase subunit HisF (257 aa).

Residues Asp-12 and Asp-131 contribute to the active site.

Belongs to the HisA/HisF family. In terms of assembly, heterodimer of HisH and HisF.

The protein resides in the cytoplasm. The catalysed reaction is 5-[(5-phospho-1-deoxy-D-ribulos-1-ylimino)methylamino]-1-(5-phospho-beta-D-ribosyl)imidazole-4-carboxamide + L-glutamine = D-erythro-1-(imidazol-4-yl)glycerol 3-phosphate + 5-amino-1-(5-phospho-beta-D-ribosyl)imidazole-4-carboxamide + L-glutamate + H(+). It participates in amino-acid biosynthesis; L-histidine biosynthesis; L-histidine from 5-phospho-alpha-D-ribose 1-diphosphate: step 5/9. IGPS catalyzes the conversion of PRFAR and glutamine to IGP, AICAR and glutamate. The HisF subunit catalyzes the cyclization activity that produces IGP and AICAR from PRFAR using the ammonia provided by the HisH subunit. The chain is Imidazole glycerol phosphate synthase subunit HisF from Hydrogenovibrio crunogenus (strain DSM 25203 / XCL-2) (Thiomicrospira crunogena).